The chain runs to 317 residues: MERERLIDIVARILRRSGLKVARVELRGGCFDLVASGLFTLLFIKVVTNIDTVTPEQAEDLKRLAKLFKATPMIVGVRTKNSEIEEGVIYERFGIYALNPATLYRVLIEGELPAIFAERGGLYVRINGELLKKLREKHGYSVGELASLLGVSRKSLLNYERNEQAVSLEVALRMEELFDEPIAEPIDVLRAKVDVELKPAEPETPLEQEVFEKLKELGMGVVKVKRAPFNALSREDEVTILTGIDEKKTRSTVRRAEMVAEVGRIINTGGLFVLEKSKMEVVSEVPLIPKESLKEIKDVDELIELIEGLKREIRKSI.

Residues 131–189 form the HTH cro/C1-type domain; the sequence is LKKLREKHGYSVGELASLLGVSRKSLLNYERNEQAVSLEVALRMEELFDEPIAEPIDVL. The H-T-H motif DNA-binding region spans 142–161; sequence VGELASLLGVSRKSLLNYER.

The polypeptide is Putative HTH-type transcriptional regulatory protein TGAM_1316 (Thermococcus gammatolerans (strain DSM 15229 / JCM 11827 / EJ3)).